Consider the following 279-residue polypeptide: ESX-1 secretion-associated protein EspG1 (279 aa).

The protein belongs to the EspG family. In terms of assembly, interacts specifically with ESX-1-dependent PE/PPE proteins.

It localises to the cytoplasm. Its function is as follows. Specific chaperone for cognate PE/PPE proteins. Plays an important role in preventing aggregation of PE/PPE dimers. The chain is ESX-1 secretion-associated protein EspG1 from Mycobacterium marinum (strain ATCC BAA-535 / M).